The primary structure comprises 452 residues: Adenylosuccinate synthetase 2 (452 aa).

Residues 19-25 (GDEGKAR) and 47-49 (GHT) each bind GTP. Asp20 acts as the Proton acceptor in catalysis. Mg(2+) is bound by residues Asp20 and Gly47. Residues 20 to 23 (DEGK), 45 to 48 (NAGH), Thr131, Arg145, Gln223, Thr238, and Arg338 each bind IMP. The Proton donor role is filled by His48. 334–340 (TGTGRPR) lines the substrate pocket. GTP contacts are provided by residues Arg340, 366–368 (KCD), and 437–439 (GLG).

The protein belongs to the adenylosuccinate synthetase family. As to quaternary structure, homodimer. It depends on Mg(2+) as a cofactor.

It is found in the cytoplasm. It catalyses the reaction IMP + L-aspartate + GTP = N(6)-(1,2-dicarboxyethyl)-AMP + GDP + phosphate + 2 H(+). The protein operates within purine metabolism; AMP biosynthesis via de novo pathway; AMP from IMP: step 1/2. In terms of biological role, plays an important role in the de novo pathway of purine nucleotide biosynthesis. Catalyzes the first committed step in the biosynthesis of AMP from IMP. The sequence is that of Adenylosuccinate synthetase 2 from Cupriavidus pinatubonensis (strain JMP 134 / LMG 1197) (Cupriavidus necator (strain JMP 134)).